A 585-amino-acid chain; its full sequence is Eukaryotic translation initiation factor 3 subunit D (585 aa).

Residues 110–130 (GGGTVFRGRGQRGVGQRGGRA) show a composition bias toward gly residues. The disordered stretch occupies residues 110-152 (GGGTVFRGRGQRGVGQRGGRAGFQRVGAGRGQGGDRYYDNRSA). Residues 300–314 (SIDLVTVNENAADAP) are RNA gate. The segment at 560–585 (VPPNTFEEDDEAAEEQEEKAEDESEE) is disordered. Residues 565-585 (FEEDDEAAEEQEEKAEDESEE) are compositionally biased toward acidic residues.

Belongs to the eIF-3 subunit D family. Component of the eukaryotic translation initiation factor 3 (eIF-3) complex.

The protein resides in the cytoplasm. Its function is as follows. mRNA cap-binding component of the eukaryotic translation initiation factor 3 (eIF-3) complex, which is involved in protein synthesis of a specialized repertoire of mRNAs and, together with other initiation factors, stimulates binding of mRNA and methionyl-tRNAi to the 40S ribosome. The eIF-3 complex specifically targets and initiates translation of a subset of mRNAs involved in cell proliferation. In the eIF-3 complex, eif3d specifically recognizes and binds the 7-methylguanosine cap of a subset of mRNAs. This chain is Eukaryotic translation initiation factor 3 subunit D, found in Aspergillus fumigatus (strain CBS 144.89 / FGSC A1163 / CEA10) (Neosartorya fumigata).